Consider the following 399-residue polypeptide: Ras-related GTP-binding protein C (399 aa).

A disordered region spans residues 1–20 (MSLQYGAEETPLAGSYGAAD). Ser-2 carries the N-acetylserine modification. Residues Ser-2 and Ser-15 each carry the phosphoserine modification. The GDP site is built by Arg-71, Ser-72, Gly-73, Lys-74, Ser-75, Ser-76, Thr-90, Glu-94, Thr-96, His-178, Lys-179, Asp-181, Ser-219, and Ile-220. Residue Lys-74 participates in GTP binding. Thr-90 lines the GTP pocket. GTP is bound at residue Thr-96. A Phosphothreonine modification is found at Thr-96. Residue Asp-181 coordinates GTP.

This sequence belongs to the GTR/RAG GTP-binding protein family. As to quaternary structure, forms a heterodimer with RRAGA, in a sequence-independent manner, and RRAGB. Heterodimerization stabilizes proteins of the heterodimer. The GDP-bound form of RRAGC (in complex with the GTP-bound form of RRAGA or RRAGB), interacts with RPTOR, thereby promoting recruitment of mTORC1 to the lysosomes. Component of the lysosomal folliculin complex (LFC), composed of FLCN, FNIP1 (or FNIP2), RagA/RRAGA or RagB/RRAGB GDP-bound, RagC/RRAGC or RagD/RRAGD GTP-bound, and Ragulator. Interacts with NOL8. Interacts with SH3BP4; the interaction with this negative regulator is most probably direct, preferentially occurs with the inactive GDP-bound form of RRAGB, is negatively regulated by amino acids and prevents interaction with RPTOR. The Rag heterodimer interacts with SLC38A9; the probable amino acid sensor. Interacts with SESN1, SESN2 and SESN3. Interacts with PIP4P1. The Rag heterodimer interacts with the Ragulator complex. The GDP-bound form interacts with TFEB. The GDP-bound form interacts with TFE3.

The protein localises to the cytoplasm. The protein resides in the nucleus. It localises to the lysosome membrane. It carries out the reaction GTP + H2O = GDP + phosphate + H(+). Its activity is regulated as follows. The activation of RagC/RRAGC is mediated by a GTPase activating protein (GAP). In high-amino acid conditions, activated by GTPase activating protein FLCN that stimulates RRAGC GTPase activity to turn it into its active GDP-bound form. In response to amino acid depletion, the GATOR1 complex inactivates RagC/RRAGC by securing the GTP-bound inactive form. In terms of biological role, guanine nucleotide-binding protein that plays a crucial role in the cellular response to amino acid availability through regulation of the mTORC1 signaling cascade. Forms heterodimeric Rag complexes with RagA/RRAGA or RagB/RRAGB and cycles between an inactive GTP-bound and an active GDP-bound form: RagC/RRAGC is in its active form when GDP-bound RagC/RRAGC forms a complex with GTP-bound RagA/RRAGA (or RagB/RRAGB) and in an inactive form when GTP-bound RagC/RRAGC heterodimerizes with GDP-bound RagA/RRAGA (or RagB/RRAGB). In its GDP-bound active form, promotes the recruitment of mTORC1 to the lysosomes and its subsequent activation by the GTPase RHEB. This is a crucial step in the activation of the MTOR signaling cascade by amino acids. Also plays a central role in the non-canonical mTORC1 complex, which acts independently of RHEB and specifically mediates phosphorylation of MiT/TFE factors TFEB and TFE3: GDP-bound RagC/RRAGC mediates recruitment of MiT/TFE factors TFEB and TFE3. This Homo sapiens (Human) protein is Ras-related GTP-binding protein C.